Consider the following 692-residue polypeptide: Junctophilin-2 (692 aa).

Residues 1–670 are Cytoplasmic-facing; the sequence is MSGGRFDFDD…EVEVEEVPNT (670 aa). 6 MORN repeats span residues 14–36, 38–59, 60–79, 82–104, 106–128, and 129–151; these read YCGGWEGGKAHGHGLCTGPKGQG, YSGSWNFGFEVAGVYTWPSGNT, FEGYWSQGKRHGLGIETKGR, YKGEWTHGFKGRYGIRQSTNSGA, YEGTWNNGLQDGYGTETYADGGT, and YQGQFTNGMRHGYGVRQSVPYGM. Phosphoserine is present on residues Ser162 and Ser165. 2 disordered regions span residues 164-190 and 246-273; these read SSLRSEHSNGTVAPDSPAADGPTLPLP and LSSGASDAASTGSLAEGAEGPDDAAAPF. MORN repeat units follow at residues 285-307 and 308-330; these read YMGEWKNDKRSGFGVSERSSGLR and YEGEWLDNLRHGYGRTTLPDGHR. The short motif at 345 to 359 is the Bipartite nuclear localization signal element; the sequence is KRRVLPLKSNKVRQK. Positions 439–661 are disordered; the sequence is NSESLLEPRE…KEVAQEAEAE (223 aa). A phosphoserine mark is found at Ser440, Ser442, and Ser462. Positions 457–471 are enriched in basic and acidic residues; it reads ERPRESPQLHERETP. Thr470 is modified (phosphothreonine). Residues 474–487 are compositionally biased toward pro residues; that stretch reads EGGPPSPAGTPPQP. Position 479 is a phosphoserine (Ser479). Position 483 is a phosphothreonine (Thr483). A Nuclear localization signal motif is present at residues 488–492; sequence KRPRP. Phosphoserine occurs at positions 527 and 533. Over residues 573–582 the composition is skewed to acidic residues; the sequence is PLEDEPEPEP. Phosphoserine is present on residues Ser589, Ser593, Ser604, and Ser609. Positions 627–640 are enriched in basic and acidic residues; it reads AEPKAKARKTEARG. The chain crosses the membrane as a helical; Anchor for type IV membrane protein span at residues 671-691; that stretch reads VLICMVILLNIGLAILFVHLL.

It belongs to the junctophilin family. In terms of assembly, interacts with TRPC3. Interacts with BAG5 and HSPA8; the interaction with HSPA8 is increased in the presence of BAG5. Junctophilin-2 N-terminal fragment: Interacts with MEF2C. Post-translationally, proteolytically cleaved by calpain in response to cardiac stress. The major cleavage site takes place at the C-terminus and leads to the release of the Junctophilin-2 N-terminal fragment chain (JP2NT). In terms of processing, phosphorylation on Ser-165, probably by PKC, affects RYR1-mediated calcium ion release, interaction with TRPC3, and skeletal muscle myotubule development.

The protein localises to the cell membrane. Its subcellular location is the sarcoplasmic reticulum membrane. The protein resides in the endoplasmic reticulum membrane. It localises to the nucleus. Its function is as follows. Membrane-binding protein that provides a structural bridge between the plasma membrane and the sarcoplasmic reticulum and is required for normal excitation-contraction coupling in cardiomyocytes. Provides a structural foundation for functional cross-talk between the cell surface and intracellular Ca(2+) release channels by maintaining the 12-15 nm gap between the sarcolemma and the sarcoplasmic reticulum membranes in the cardiac dyads. Necessary for proper intracellular Ca(2+) signaling in cardiac myocytes via its involvement in ryanodine receptor-mediated calcium ion release. Contributes to the construction of skeletal muscle triad junctions. Functionally, transcription repressor required to safeguard against the deleterious effects of cardiac stress. Generated following cleavage of the Junctophilin-2 chain by calpain in response to cardiac stress in cardiomyocytes. Following cleavage and release from the membrane, translocates to the nucleus, binds DNA and represses expression of genes implicated in cell growth and differentiation, hypertrophy, inflammation and fibrosis. Modifies the transcription profile and thereby attenuates pathological remodeling in response to cardiac stress. Probably acts by competing with MEF2 transcription factors and TATA-binding proteins. This chain is Junctophilin-2, found in Rattus norvegicus (Rat).